The chain runs to 360 residues: GDSL esterase/lipase At2g31550 (360 aa).

The first 27 residues, 1-27 (MSTSKAITLTLFITTTLLASCDAAANA), serve as a signal peptide directing secretion. An N-linked (GlcNAc...) asparagine glycan is attached at Asn-26. The Nucleophile role is filled by Ser-42. Asn-104 and Asn-326 each carry an N-linked (GlcNAc...) asparagine glycan. Residues Asp-334 and His-337 contribute to the active site.

This sequence belongs to the 'GDSL' lipolytic enzyme family.

The protein localises to the secreted. The sequence is that of GDSL esterase/lipase At2g31550 from Arabidopsis thaliana (Mouse-ear cress).